The sequence spans 185 residues: Acireductone dioxygenase (185 aa).

The tract at residues 1–22 (MSRLSIHPEGSTNATSPAEPLL) is disordered. H102, H104, E108, and H146 together coordinate Fe(2+). Ni(2+)-binding residues include H102, H104, E108, and H146.

This sequence belongs to the acireductone dioxygenase (ARD) family. In terms of assembly, monomer. It depends on Fe(2+) as a cofactor. Ni(2+) serves as cofactor.

The catalysed reaction is 1,2-dihydroxy-5-(methylsulfanyl)pent-1-en-3-one + O2 = 3-(methylsulfanyl)propanoate + CO + formate + 2 H(+). The enzyme catalyses 1,2-dihydroxy-5-(methylsulfanyl)pent-1-en-3-one + O2 = 4-methylsulfanyl-2-oxobutanoate + formate + 2 H(+). The protein operates within amino-acid biosynthesis; L-methionine biosynthesis via salvage pathway; L-methionine from S-methyl-5-thio-alpha-D-ribose 1-phosphate: step 5/6. Its function is as follows. Catalyzes 2 different reactions between oxygen and the acireductone 1,2-dihydroxy-3-keto-5-methylthiopentene (DHK-MTPene) depending upon the metal bound in the active site. Fe-containing acireductone dioxygenase (Fe-ARD) produces formate and 2-keto-4-methylthiobutyrate (KMTB), the alpha-ketoacid precursor of methionine in the methionine recycle pathway. Ni-containing acireductone dioxygenase (Ni-ARD) produces methylthiopropionate, carbon monoxide and formate, and does not lie on the methionine recycle pathway. This Prochlorococcus marinus (strain MIT 9313) protein is Acireductone dioxygenase.